A 298-amino-acid polypeptide reads, in one-letter code: Glycine--tRNA ligase alpha subunit (298 aa).

This sequence belongs to the class-II aminoacyl-tRNA synthetase family. Tetramer of two alpha and two beta subunits.

It is found in the cytoplasm. It catalyses the reaction tRNA(Gly) + glycine + ATP = glycyl-tRNA(Gly) + AMP + diphosphate. This Lacticaseibacillus paracasei (strain ATCC 334 / BCRC 17002 / CCUG 31169 / CIP 107868 / KCTC 3260 / NRRL B-441) (Lactobacillus paracasei) protein is Glycine--tRNA ligase alpha subunit.